A 362-amino-acid chain; its full sequence is Stress response regulator protein 1 (362 aa).

2 disordered regions span residues 1-39 and 163-188; these read MTRL…SLVQ and TLKS…ETKT. The segment covering 19 to 39 has biased composition (low complexity); the sequence is PSQLLHSASLSSSPSSPSLVQ. Residues 209 to 327 form the Response regulatory domain; it reads KFLLVDDNLI…LDFMANVIDE (119 aa). 4-aspartylphosphate is present on aspartate 260.

Required for stress adaptation, morphogenesis and virulence. This Lodderomyces elongisporus (strain ATCC 11503 / CBS 2605 / JCM 1781 / NBRC 1676 / NRRL YB-4239) (Yeast) protein is Stress response regulator protein 1 (SRR1).